The primary structure comprises 555 residues: CTP synthase (555 aa).

An amidoligase domain region spans residues 1–265; it reads MTRYIFITGG…GNRVCEKLNI (265 aa). Residue serine 13 participates in CTP binding. Serine 13 is a UTP binding site. Residues 14-19 and aspartate 71 contribute to the ATP site; that span reads SLGKGI. Mg(2+) contacts are provided by aspartate 71 and glutamate 139. CTP is bound by residues 146 to 148, 186 to 191, and lysine 222; these read DIE and KTKPTQ. UTP contacts are provided by residues 186–191 and lysine 222; that span reads KTKPTQ. Residues 290–541 form the Glutamine amidotransferase type-1 domain; that stretch reads TVAVVGKYVD…IKAGLAAKEA (252 aa). Glycine 351 is an L-glutamine binding site. Catalysis depends on cysteine 378, which acts as the Nucleophile; for glutamine hydrolysis. L-glutamine contacts are provided by residues 379–382, glutamate 402, and arginine 469; that span reads LGMQ. Active-site residues include histidine 514 and glutamate 516.

It belongs to the CTP synthase family. Homotetramer.

The enzyme catalyses UTP + L-glutamine + ATP + H2O = CTP + L-glutamate + ADP + phosphate + 2 H(+). The catalysed reaction is L-glutamine + H2O = L-glutamate + NH4(+). It catalyses the reaction UTP + NH4(+) + ATP = CTP + ADP + phosphate + 2 H(+). The protein operates within pyrimidine metabolism; CTP biosynthesis via de novo pathway; CTP from UDP: step 2/2. With respect to regulation, allosterically activated by GTP, when glutamine is the substrate; GTP has no effect on the reaction when ammonia is the substrate. The allosteric effector GTP functions by stabilizing the protein conformation that binds the tetrahedral intermediate(s) formed during glutamine hydrolysis. Inhibited by the product CTP, via allosteric rather than competitive inhibition. Catalyzes the ATP-dependent amination of UTP to CTP with either L-glutamine or ammonia as the source of nitrogen. Regulates intracellular CTP levels through interactions with the four ribonucleotide triphosphates. This Coxiella burnetii (strain RSA 493 / Nine Mile phase I) protein is CTP synthase.